The following is a 1357-amino-acid chain: Major yolk protein (1357 aa).

Positions 1 to 15 (MRAAILFCLVASSMA) are cleaved as a signal peptide. Transferrin-like domains follow at residues 132–478 (VRWC…GEVY) and 493–1101 (AKIC…AIVK). Residues asparagine 198, asparagine 227, asparagine 304, asparagine 310, asparagine 402, asparagine 499, asparagine 530, asparagine 541, asparagine 572, asparagine 578, asparagine 625, asparagine 639, asparagine 692, asparagine 732, asparagine 741, asparagine 1035, asparagine 1043, asparagine 1081, asparagine 1128, asparagine 1208, asparagine 1241, and asparagine 1258 are each glycosylated (N-linked (GlcNAc...) asparagine).

This sequence belongs to the transferrin family. In terms of tissue distribution, synthesized in the intestines of the females and males and also in ovaries and testis.

Its subcellular location is the secreted. Functionally, may serve the following two functions: a classical role as a yolk protein precursor and probably shuttle iron to developing germ cells. The chain is Major yolk protein from Strongylocentrotus purpuratus (Purple sea urchin).